The following is a 169-amino-acid chain: ATP synthase subunit b (169 aa).

A helical transmembrane segment spans residues 14-34 (TFLAMLISFLILVFILQQVAF).

This sequence belongs to the ATPase B chain family. In terms of assembly, F-type ATPases have 2 components, F(1) - the catalytic core - and F(0) - the membrane proton channel. F(1) has five subunits: alpha(3), beta(3), gamma(1), delta(1), epsilon(1). F(0) has four main subunits: a(1), b(2) and c(10-14). The alpha and beta chains form an alternating ring which encloses part of the gamma chain. F(1) is attached to F(0) by a central stalk formed by the gamma and epsilon chains, while a peripheral stalk is formed by the delta and b chains.

It is found in the cell membrane. F(1)F(0) ATP synthase produces ATP from ADP in the presence of a proton or sodium gradient. F-type ATPases consist of two structural domains, F(1) containing the extramembraneous catalytic core and F(0) containing the membrane proton channel, linked together by a central stalk and a peripheral stalk. During catalysis, ATP synthesis in the catalytic domain of F(1) is coupled via a rotary mechanism of the central stalk subunits to proton translocation. In terms of biological role, component of the F(0) channel, it forms part of the peripheral stalk, linking F(1) to F(0). In Heliobacterium modesticaldum (strain ATCC 51547 / Ice1), this protein is ATP synthase subunit b.